Consider the following 195-residue polypeptide: dTTP/UTP pyrophosphatase (195 aa).

Asp70 acts as the Proton acceptor in catalysis.

This sequence belongs to the Maf family. YhdE subfamily. A divalent metal cation serves as cofactor.

The protein resides in the cytoplasm. The catalysed reaction is dTTP + H2O = dTMP + diphosphate + H(+). The enzyme catalyses UTP + H2O = UMP + diphosphate + H(+). Functionally, nucleoside triphosphate pyrophosphatase that hydrolyzes dTTP and UTP. May have a dual role in cell division arrest and in preventing the incorporation of modified nucleotides into cellular nucleic acids. This chain is dTTP/UTP pyrophosphatase, found in Methanococcoides burtonii (strain DSM 6242 / NBRC 107633 / OCM 468 / ACE-M).